A 106-amino-acid chain; its full sequence is UPF0145 protein AZOSEA16190 (106 aa).

Belongs to the UPF0145 family.

This Aromatoleum aromaticum (strain DSM 19018 / LMG 30748 / EbN1) (Azoarcus sp. (strain EbN1)) protein is UPF0145 protein AZOSEA16190.